The sequence spans 513 residues: Quiannulatic acid synthase (513 aa).

A helical transmembrane segment spans residues 14 to 34; sequence VFTFCNIILALASLVVAQCVY. N-linked (GlcNAc...) asparagine glycosylation occurs at asparagine 308. Residue cysteine 477 participates in heme binding.

The protein belongs to the cytochrome P450 family. Heme is required as a cofactor.

It is found in the membrane. It carries out the reaction quiannulatene + 3 reduced [NADPH--hemoprotein reductase] + 3 O2 = quiannulatate + 3 oxidized [NADPH--hemoprotein reductase] + 4 H2O + 4 H(+). The protein operates within secondary metabolite biosynthesis; terpenoid biosynthesis. Its function is as follows. Cytochrome P450 monooxygenase; part of the gene cluster that mediates the biosynthesis of the pentacyclic sesterterpene quiannulatic acid. The first step of the pathway is performed by the sesterterpene synthase (QS) that possesses both prenyl transferase and terpene cyclase activity, converting isopentenyl diphosphate and dimethylallyl diphosphate into geranylfarnesyl diphosphate (GFPP) and further converting GFPP into quiannulatene via an unprecedented cyclization mode which involves three rounds of hydride shifts and two successive C-C bond migrations to construct the 5-6-5-5-5 fused ring. The cytochrome P450 monooxygenase Qnn-P450 then oxidizes quiannulatene at C-19 in 3 successive reactions to afford quiannulatic acid. The protein is Quiannulatic acid synthase of Emericella variicolor (Aspergillus stellatus).